We begin with the raw amino-acid sequence, 429 residues long: 26S proteasome regulatory subunit RPN7 (429 aa).

A phosphoserine mark is found at Ser-8 and Ser-77. The TPR repeat unit spans residues Ala-131–Thr-164. The PCI domain occupies Asn-223–Asn-395.

The 26S proteasome is composed of a core protease, known as the 20S proteasome, capped at one or both ends by the 19S regulatory complex (RC). The RC is composed of at least 18 different subunits in two subcomplexes, the base and the lid, which form the portions proximal and distal to the 20S proteolytic core, respectively. Component of the lid subcomplex of the 19S RC.

The protein localises to the nucleus. Functionally, component of the 19S cap proteasome complex which acts as a regulatory subunit of the 26S proteasome, involved in the ATP-dependent degradation of ubiquitinated proteins. This chain is 26S proteasome regulatory subunit RPN7, found in Saccharomyces cerevisiae (strain ATCC 204508 / S288c) (Baker's yeast).